A 127-amino-acid polypeptide reads, in one-letter code: Fluoride-specific ion channel FluC (127 aa).

Helical transmembrane passes span 4–24 (PILAIALGSTLGGLLRWGLGL), 36–56 (GTLVANLIAGYVVGVAIAFFA), 68–88 (LVITGFCGGLSTFSTFSAEIV), and 98–118 (WAMSAIAVHVAGSLIMTLAGI). Residues Gly75 and Ser78 each coordinate Na(+).

The protein belongs to the fluoride channel Fluc/FEX (TC 1.A.43) family.

It is found in the cell inner membrane. It carries out the reaction fluoride(in) = fluoride(out). Its activity is regulated as follows. Na(+) is not transported, but it plays an essential structural role and its presence is essential for fluoride channel function. Its function is as follows. Fluoride-specific ion channel. Important for reducing fluoride concentration in the cell, thus reducing its toxicity. This is Fluoride-specific ion channel FluC from Nitrosomonas europaea (strain ATCC 19718 / CIP 103999 / KCTC 2705 / NBRC 14298).